The chain runs to 151 residues: MIQSINHVTYSVSDISKSINFYKDILKAKILVESDKTAYFILGGLWLALNEEKDIPRNEIRYSYTHMAFTIEESEFEEWYQWLNDNNVNILEGRTRDVRDKKSIYFTDPDGHKFELHTGTLQDRLDYYKEEKPHMKFYEWDEVDKTDNNRE.

Residues 4–119 form the VOC domain; it reads SINHVTYSVS…DGHKFELHTG (116 aa). The Mg(2+) site is built by histidine 7, histidine 66, and glutamate 115. Catalysis depends on glutamate 115, which acts as the Proton donor/acceptor.

It belongs to the fosfomycin resistance protein family. FosB subfamily. As to quaternary structure, homodimer. Requires Mg(2+) as cofactor.

The protein resides in the cytoplasm. Its function is as follows. Metallothiol transferase which confers resistance to fosfomycin by catalyzing the addition of a thiol cofactor to fosfomycin. L-cysteine is probably the physiological thiol donor. The protein is Metallothiol transferase FosB of Staphylococcus saprophyticus subsp. saprophyticus (strain ATCC 15305 / DSM 20229 / NCIMB 8711 / NCTC 7292 / S-41).